Here is a 561-residue protein sequence, read N- to C-terminus: Mesoderm induction early response protein 2 (561 aa).

Disordered stretches follow at residues 1-28 and 52-188; these read MAEASSLERQSPGAASCLPHSLCPGEPN and QNYG…EDPL. Phosphoserine is present on S11. A compositionally biased stretch (polar residues) spans 140-165; it reads QSSADDLTPSVTSHEASDLFPSQSGS. One can recognise an ELM2 domain in the interval 195–292; it reads KEIMVGPQFQ…EALRRLRFNV (98 aa). The 53-residue stretch at 297–349 folds into the SANT domain; sequence DGLCAWSEEERRNFEHGFRVHGKNFHLIQANKVRTRSVGECVEYYYLWKKSER. Residues 360–515 are disordered; the sequence is GRRKYGPSGN…DGEPEETVGP (156 aa). A compositionally biased stretch (low complexity) spans 417–428; that stretch reads LSMGSSMSRSLG. Over residues 439 to 451 the composition is skewed to pro residues; it reads SSEPGPRLFPPLD. Residues 453 to 482 are compositionally biased toward low complexity; it reads PSALPSSRRPPALAEPAFFPPATAAPEPGA.

As to quaternary structure, part of a complex containing at least CDYL, MIER1, MIER2, HDAC1 and HDAC2.

The protein resides in the nucleus. In terms of biological role, transcriptional repressor. This Bos taurus (Bovine) protein is Mesoderm induction early response protein 2 (MIER2).